The chain runs to 163 residues: Inorganic pyrophosphatase (163 aa).

Glu-9 contacts Mg(2+). The substrate site is built by Lys-17, Arg-31, and Tyr-43. Residues Asp-53, Asp-58, Asp-85, and Asp-90 each contribute to the Mg(2+) site. The active-site Proton acceptor is Asp-90. Tyr-127 provides a ligand contact to substrate.

This sequence belongs to the PPase family. As to quaternary structure, homohexamer. It depends on Mg(2+) as a cofactor.

It is found in the cytoplasm. The catalysed reaction is diphosphate + H2O = 2 phosphate + H(+). In terms of biological role, catalyzes the hydrolysis of inorganic pyrophosphate (PPi) forming two phosphate ions. The polypeptide is Inorganic pyrophosphatase (Leifsonia xyli subsp. xyli (strain CTCB07)).